A 254-amino-acid polypeptide reads, in one-letter code: 4-hydroxy-tetrahydrodipicolinate reductase (254 aa).

NAD(+)-binding positions include 8-13 (GCSGKM), Asp35, 86-88 (CST), and 110-113 (SANM). His143 (proton donor/acceptor) is an active-site residue. His144 is a binding site for (S)-2,3,4,5-tetrahydrodipicolinate. Lys147 serves as the catalytic Proton donor. Residue 153 to 154 (GT) participates in (S)-2,3,4,5-tetrahydrodipicolinate binding.

It belongs to the DapB family.

It is found in the cytoplasm. It carries out the reaction (S)-2,3,4,5-tetrahydrodipicolinate + NAD(+) + H2O = (2S,4S)-4-hydroxy-2,3,4,5-tetrahydrodipicolinate + NADH + H(+). It catalyses the reaction (S)-2,3,4,5-tetrahydrodipicolinate + NADP(+) + H2O = (2S,4S)-4-hydroxy-2,3,4,5-tetrahydrodipicolinate + NADPH + H(+). Its pathway is amino-acid biosynthesis; L-lysine biosynthesis via DAP pathway; (S)-tetrahydrodipicolinate from L-aspartate: step 4/4. Catalyzes the conversion of 4-hydroxy-tetrahydrodipicolinate (HTPA) to tetrahydrodipicolinate. This is 4-hydroxy-tetrahydrodipicolinate reductase from Clostridium perfringens (strain SM101 / Type A).